The primary structure comprises 654 residues: Beta-mannosyltransferase 2 (654 aa).

The Cytoplasmic portion of the chain corresponds to 1-37; it reads MLAWLRHRIRSYNTSTYSSILPSASFGKVYKIGTKLN. The chain crosses the membrane as a helical span at residues 38 to 58; the sequence is FTLLALCLLLACSVFFNYFYL. At 59–654 the chain is on the extracellular side; sequence ADNNGLDIDT…ANGNGKGSSS (596 aa).

It belongs to the BMT family.

It localises to the membrane. Beta-mannosyltransferase involved in cell wall biosynthesis. Required for the addition of beta-mannose to the acid-labile fraction of cell wall phosphopeptidomannan. In Candida albicans (strain SC5314 / ATCC MYA-2876) (Yeast), this protein is Beta-mannosyltransferase 2 (RHD1).